A 170-amino-acid polypeptide reads, in one-letter code: UPF0260 protein RPC_1790 (170 aa).

It belongs to the UPF0260 family.

This Rhodopseudomonas palustris (strain BisB18) protein is UPF0260 protein RPC_1790.